Consider the following 338-residue polypeptide: Anthranilate phosphoribosyltransferase (338 aa).

5-phospho-alpha-D-ribose 1-diphosphate-binding positions include Gly81, 84–85, Ser89, 91–94, 109–117, and Ala121; these read GD, NVST, and KHGNRALSS. An anthranilate-binding site is contributed by Gly81. Ser93 is a Mg(2+) binding site. Asn112 lines the anthranilate pocket. Arg167 lines the anthranilate pocket. Positions 226 and 227 each coordinate Mg(2+).

It belongs to the anthranilate phosphoribosyltransferase family. In terms of assembly, homodimer. Mg(2+) is required as a cofactor.

It catalyses the reaction N-(5-phospho-beta-D-ribosyl)anthranilate + diphosphate = 5-phospho-alpha-D-ribose 1-diphosphate + anthranilate. The protein operates within amino-acid biosynthesis; L-tryptophan biosynthesis; L-tryptophan from chorismate: step 2/5. Functionally, catalyzes the transfer of the phosphoribosyl group of 5-phosphorylribose-1-pyrophosphate (PRPP) to anthranilate to yield N-(5'-phosphoribosyl)-anthranilate (PRA). This chain is Anthranilate phosphoribosyltransferase, found in Rhodopseudomonas palustris (strain HaA2).